The chain runs to 240 residues: MNAEKSPENHNVDHEEIAKFEAVASRWWDLEGEFKPLHRINPLRLGYIAERAGGLFGKKVLDVGCGGGILAESMAREGATVTGLDMGFEPLQVAKLHALESGIQVDYVQETVEEHAAKHAGQYDVVTCMEMLEHVPDPQSVVRACAQLVKPGGDVFFSTLNRNGKSWLMAVVGAEYILRMVPKGTHDVKKFIKPAELLGWVDQTSLKERHITGLHYNPITNSFKLGPGVDVNYMLHTQNK.

4 residues coordinate S-adenosyl-L-methionine: Arg44, Gly64, Asp85, and Met129.

It belongs to the methyltransferase superfamily. UbiG/COQ3 family.

It carries out the reaction a 3-demethylubiquinol + S-adenosyl-L-methionine = a ubiquinol + S-adenosyl-L-homocysteine + H(+). The catalysed reaction is a 3-(all-trans-polyprenyl)benzene-1,2-diol + S-adenosyl-L-methionine = a 2-methoxy-6-(all-trans-polyprenyl)phenol + S-adenosyl-L-homocysteine + H(+). Its pathway is cofactor biosynthesis; ubiquinone biosynthesis. Functionally, O-methyltransferase that catalyzes the 2 O-methylation steps in the ubiquinone biosynthetic pathway. In Shigella flexneri serotype 5b (strain 8401), this protein is Ubiquinone biosynthesis O-methyltransferase.